A 121-amino-acid polypeptide reads, in one-letter code: Protein opa (121 aa).

Belongs to the opacity porin family.

In Haemophilus influenzae (strain ATCC 51907 / DSM 11121 / KW20 / Rd), this protein is Protein opa (opa).